Reading from the N-terminus, the 136-residue chain is uncharacterized protein (136 aa).

Its subcellular location is the mitochondrion. This is an uncharacterized protein from Arabidopsis thaliana (Mouse-ear cress).